Here is a 61-residue protein sequence, read N- to C-terminus: Probable tautomerase BA_5626/GBAA_5626/BAS5226 (61 aa).

The Proton acceptor; via imino nitrogen role is filled by proline 2.

This sequence belongs to the 4-oxalocrotonate tautomerase family.

In Bacillus anthracis, this protein is Probable tautomerase BA_5626/GBAA_5626/BAS5226.